A 379-amino-acid polypeptide reads, in one-letter code: MSFRKTHPLIKIVNSTLVDLPSPANLSVNWNYGSLLGLVLVIQLITGIVLATRFSGHSDMSFDSVISIYQDSNYGWLLRLVHSTGASFFFLFIYLHIGRGLYYGSYVYPEVWNIGVLIYLILMGTAFLGYVLPWGQMSYWAATVITNLLSAIPWLGPTMVEWVWGGFAVGNPTLTRFFALHYLLPFVVTALVILHIFYLHIYGSSNPLGISSNTNKVSFHYYYSVKDLYVYFVFFFVFMVFTLKYGYVFMDAENFIPANPLVTPTHIQPEWYFLFAYAILRSIPNKLGGVVGLLLAVLVLFLFSVSTSKLLFSGTIYSPLARLLYWSLVSNFFLLTWLGSCPAESPYNEVALVATVTYFTFMLTMCALPHISTYLYLKS.

The next 4 membrane-spanning stretches (helical) occupy residues 32-52 (YGSL…VLAT), 76-98 (WLLR…LHIG), 111-131 (VWNI…LGYV), and 177-197 (FFAL…LHIF). His82 and His96 together coordinate heme b. Heme b-binding residues include His181 and His195. His200 is an a ubiquinone binding site. Helical transmembrane passes span 223-243 (YSVK…VFTL), 287-304 (LGGV…FLFS), 320-340 (LARL…WLGS), and 348-367 (NEVA…TMCA).

This sequence belongs to the cytochrome b family. In terms of assembly, the main subunits of complex b-c1 are: cytochrome b, cytochrome c1 and the Rieske protein. The cofactor is heme b.

Its subcellular location is the mitochondrion inner membrane. Functionally, component of the ubiquinol-cytochrome c reductase complex (complex III or cytochrome b-c1 complex) that is part of the mitochondrial respiratory chain. The b-c1 complex mediates electron transfer from ubiquinol to cytochrome c. Contributes to the generation of a proton gradient across the mitochondrial membrane that is then used for ATP synthesis. The sequence is that of Cytochrome b (mt:Cyt-b) from Brachionus plicatilis (Marine rotifer).